The primary structure comprises 349 residues: Protein RecA (349 aa).

Residue 65–72 (GPESSGKT) participates in ATP binding.

This sequence belongs to the RecA family.

The protein localises to the cytoplasm. Functionally, can catalyze the hydrolysis of ATP in the presence of single-stranded DNA, the ATP-dependent uptake of single-stranded DNA by duplex DNA, and the ATP-dependent hybridization of homologous single-stranded DNAs. It interacts with LexA causing its activation and leading to its autocatalytic cleavage. This Acinetobacter baumannii (strain AB307-0294) protein is Protein RecA.